The primary structure comprises 501 residues: Glycerol kinase (501 aa).

Threonine 16 lines the ADP pocket. Residues threonine 16, threonine 17, and serine 18 each coordinate ATP. Threonine 16 serves as a coordination point for sn-glycerol 3-phosphate. Residue arginine 20 participates in ADP binding. Sn-glycerol 3-phosphate contacts are provided by arginine 84, glutamate 85, tyrosine 135, and aspartate 242. Positions 84, 85, 135, 242, and 243 each coordinate glycerol. Threonine 264 and glycine 307 together coordinate ADP. 4 residues coordinate ATP: threonine 264, glycine 307, glutamine 311, and glycine 408. Glycine 408 is an ADP binding site.

It belongs to the FGGY kinase family.

The enzyme catalyses glycerol + ATP = sn-glycerol 3-phosphate + ADP + H(+). It participates in polyol metabolism; glycerol degradation via glycerol kinase pathway; sn-glycerol 3-phosphate from glycerol: step 1/1. Its function is as follows. Key enzyme in the regulation of glycerol uptake and metabolism. Catalyzes the phosphorylation of glycerol to yield sn-glycerol 3-phosphate. This chain is Glycerol kinase, found in Saccharolobus islandicus (strain L.S.2.15 / Lassen #1) (Sulfolobus islandicus).